The sequence spans 78 residues: MSKNNLNETESKIEIEAKVVELLSNDKFKVELPNKKTIIAYVSGKIRINNIRILPGDKVRIELSPYDPTRARITYRFK.

In terms of domain architecture, S1-like spans 2-78 (SKNNLNETES…TRARITYRFK (77 aa)).

Belongs to the IF-1 family. As to quaternary structure, component of the 30S ribosomal translation pre-initiation complex which assembles on the 30S ribosome in the order IF-2 and IF-3, IF-1 and N-formylmethionyl-tRNA(fMet); mRNA recruitment can occur at any time during PIC assembly.

The protein resides in the cytoplasm. One of the essential components for the initiation of protein synthesis. Stabilizes the binding of IF-2 and IF-3 on the 30S subunit to which N-formylmethionyl-tRNA(fMet) subsequently binds. Helps modulate mRNA selection, yielding the 30S pre-initiation complex (PIC). Upon addition of the 50S ribosomal subunit IF-1, IF-2 and IF-3 are released leaving the mature 70S translation initiation complex. In Onion yellows phytoplasma (strain OY-M), this protein is Translation initiation factor IF-1.